Here is a 473-residue protein sequence, read N- to C-terminus: Ribulose bisphosphate carboxylase large chain 1 (473 aa).

The substrate site is built by Asn116 and Thr166. Residue Lys168 is the Proton acceptor of the active site. Substrate is bound at residue Lys170. Mg(2+) contacts are provided by Lys194, Asp196, and Glu197. Residue Lys194 is modified to N6-carboxylysine. The active-site Proton acceptor is His287. Substrate is bound by residues Arg288, His320, and Ser372.

It belongs to the RuBisCO large chain family. Type I subfamily. As to quaternary structure, heterohexadecamer of 8 large chains and 8 small chains. The cofactor is Mg(2+).

The enzyme catalyses 2 (2R)-3-phosphoglycerate + 2 H(+) = D-ribulose 1,5-bisphosphate + CO2 + H2O. It catalyses the reaction D-ribulose 1,5-bisphosphate + O2 = 2-phosphoglycolate + (2R)-3-phosphoglycerate + 2 H(+). Functionally, ruBisCO catalyzes two reactions: the carboxylation of D-ribulose 1,5-bisphosphate, the primary event in carbon dioxide fixation, as well as the oxidative fragmentation of the pentose substrate. Both reactions occur simultaneously and in competition at the same active site. The chain is Ribulose bisphosphate carboxylase large chain 1 from Nitrobacter winogradskyi (strain ATCC 25391 / DSM 10237 / CIP 104748 / NCIMB 11846 / Nb-255).